The following is a 249-amino-acid chain: Cis-4-hydroxycyclohexanecarboxylate dehydrogenase (249 aa).

NAD(+)-binding residues include Asp-38, Asp-63, Val-64, Asn-90, Tyr-156, Lys-160, Ala-189, and Thr-191. The Proton acceptor role is filled by Tyr-156.

The protein belongs to the short-chain dehydrogenases/reductases (SDR) family. As to quaternary structure, homotetramer.

The catalysed reaction is cis-4-hydroxycyclohexane-1-carboxylate + NAD(+) = 4-oxocyclohexane-1-carboxylate + NADH + H(+). Dehydrogenase involved in a cyclohexanecarboxylate (CHCA) degradation pathway. Catalyzes the NAD(+)-dependent dehydrogenation of cis-4-hydroxycyclohexanecarboxylate (cis-4-hydroxyCHCA) to form 4-oxocyclohexanecarboxylate (4-oxoCHCA). Is highly specific for the cis-4-hydroxy derivative and shows only weak activity with trans-4-hydroxyCHCA. Cannot use NADP(+). The sequence is that of Cis-4-hydroxycyclohexanecarboxylate dehydrogenase from Sinomonas cyclohexanicum (Corynebacterium cyclohexanicum).